The chain runs to 1135 residues: DNA-directed RNA polymerase I subunit RPA2 (1135 aa).

The interval 1–26 is disordered; that stretch reads MDVDGRWRNLPSGPSLKHLTDPSYGI. Residue Arg-180 participates in RNA binding. Residues 194–208 are loop B; it reads VRPKWKSRGLGYTQF. The tract at residues 236 to 247 is loop A; the sequence is LNFIYRKELFFL. Asp-367 contributes to the RNA binding site. Fork loop stretches follow at residues 439 to 453 and 474 to 489; these read LRSK…DSGL and RGAA…VRRL. Residue Asp-755 participates in Mg(2+) binding. Residue Lys-890 participates in RNA binding. Positions 1020 and 1036 each coordinate DNA. A Phosphoserine modification is found at Ser-1051. Positions 1070, 1073, 1098, and 1101 each coordinate Zn(2+). The C4-type zinc finger occupies 1070 to 1101; the sequence is CVECGSLLSPLLEKPPPSWSAMRNRKYNCTVC.

Belongs to the RNA polymerase beta chain family. In terms of assembly, component of the RNA polymerase I (Pol I) complex consisting of 13 subunits: a ten-subunit catalytic core composed of POLR1A/RPA1, POLR1B/RPA2, POLR1C/RPAC1, POLR1D/RPAC2, POLR1H/RPA12, POLR2E/RPABC1, POLR2F/RPABC2, POLR2H/RPABC3, POLR2K/RPABC4 and POLR2L/RPABC5; a mobile stalk subunit POLR1F/RPA43 protruding from the core and additional subunits homologous to general transcription factors POLR1E/RPA49 and POLR1G/RPA34. Part of Pol I pre-initiation complex (PIC), in which Pol I core assembles with RRN3 and promoter-bound UTBF and SL1/TIF-IB complex. The cofactor is Mg(2+).

It localises to the nucleus. It is found in the nucleolus. The protein localises to the chromosome. It catalyses the reaction RNA(n) + a ribonucleoside 5'-triphosphate = RNA(n+1) + diphosphate. Its function is as follows. Catalytic core component of RNA polymerase I (Pol I), a DNA-dependent RNA polymerase which synthesizes ribosomal RNA precursors using the four ribonucleoside triphosphates as substrates. Transcribes 47S pre-rRNAs from multicopy rRNA gene clusters, giving rise to 5.8S, 18S and 28S ribosomal RNAs. Pol I-mediated transcription cycle proceeds through transcription initiation, transcription elongation and transcription termination stages. During transcription initiation, Pol I pre-initiation complex (PIC) is recruited by the selectivity factor 1 (SL1/TIF-IB) complex bound to the core promoter that precedes an rDNA repeat unit. The PIC assembly bends the promoter favoring the formation of the transcription bubble and promoter escape. Once the polymerase has escaped from the promoter it enters the elongation phase during which RNA is actively polymerized, based on complementarity with the template DNA strand. Highly processive, assembles in structures referred to as 'Miller trees' where many elongating Pol I complexes queue and transcribe the same rDNA coding regions. At terminator sequences downstream of the rDNA gene, PTRF interacts with Pol I and halts Pol I transcription leading to the release of the RNA transcript and polymerase from the DNA. Forms Pol I active center together with the largest subunit POLR1A/RPA1. Appends one nucleotide at a time to the 3' end of the nascent RNA, with POLR1A/RPA1 contributing a Mg(2+)-coordinating DxDGD motif, and POLR1B/RPA2 participating in the coordination of a second Mg(2+) ion and providing lysine residues believed to facilitate Watson-Crick base pairing between the incoming nucleotide and the template base. Typically, Mg(2+) ions direct a 5' nucleoside triphosphate to form a phosphodiester bond with the 3' hydroxyl of the preceding nucleotide of the nascent RNA, with the elimination of pyrophosphate. Has proofreading activity: Pauses and backtracks to allow the cleavage of a missincorporated nucleotide via POLR1H/RPA12. High Pol I processivity is associated with decreased transcription fidelity. This chain is DNA-directed RNA polymerase I subunit RPA2, found in Mus musculus (Mouse).